The chain runs to 907 residues: NADH-quinone oxidoreductase subunit G (907 aa).

Residues 1-83 (MTIIFVDNEE…GMIVSTSDKI (83 aa)) form the 2Fe-2S ferredoxin-type domain. Positions 34, 45, 48, and 67 each coordinate [2Fe-2S] cluster. Positions 83–122 (ISRNFRKGIIELLMLNHPHDCPICEEGGSCHLQDMTVMAG) constitute a 4Fe-4S His(Cys)3-ligated-type domain. 12 residues coordinate [4Fe-4S] cluster: H99, C103, C106, C112, C151, C154, C157, C201, C228, C231, C235, and C263. The 4Fe-4S Mo/W bis-MGD-type domain occupies 221 to 277 (MQYAPSICQHCCVGCNISVGEKYGKISRIENRYHNAINHYFLCDLGRFSYDYSNVDE).

Belongs to the complex I 75 kDa subunit family. As to quaternary structure, composed of 13 different subunits. Subunits NuoCD, E, F, and G constitute the peripheral sector of the complex. [2Fe-2S] cluster is required as a cofactor. Requires [4Fe-4S] cluster as cofactor.

The catalysed reaction is a quinone + NADH + 5 H(+)(in) = a quinol + NAD(+) + 4 H(+)(out). Its function is as follows. NDH-1 shuttles electrons from NADH, via FMN and iron-sulfur (Fe-S) centers, to quinones in the respiratory chain. Couples the redox reaction to proton translocation (for every two electrons transferred, four hydrogen ions are translocated across the cytoplasmic membrane), and thus conserves the redox energy in a proton gradient. In Buchnera aphidicola subsp. Baizongia pistaciae (strain Bp), this protein is NADH-quinone oxidoreductase subunit G (nuoG).